An 813-amino-acid chain; its full sequence is Lon protease (813 aa).

Positions 14–207 constitute a Lon N-terminal domain; sequence LPLLPLRGII…ILTEILAREM (194 aa). 359–366 lines the ATP pocket; it reads GPPGVGKT. The Lon proteolytic domain occupies 595–776; sequence ESQVGVATGL…DQVIREALLE (182 aa). Catalysis depends on residues Ser682 and Lys725.

This sequence belongs to the peptidase S16 family. As to quaternary structure, homohexamer. Organized in a ring with a central cavity.

The protein resides in the cytoplasm. It catalyses the reaction Hydrolysis of proteins in presence of ATP.. Functionally, ATP-dependent serine protease that mediates the selective degradation of mutant and abnormal proteins as well as certain short-lived regulatory proteins. Required for cellular homeostasis and for survival from DNA damage and developmental changes induced by stress. Degrades polypeptides processively to yield small peptide fragments that are 5 to 10 amino acids long. Binds to DNA in a double-stranded, site-specific manner. This chain is Lon protease, found in Heliobacterium modesticaldum (strain ATCC 51547 / Ice1).